The sequence spans 4776 residues: Pneumococcal serine-rich repeat protein (4776 aa).

Residues 1–72 (MTETVEDKVS…VVLGTISTSN (72 aa)) form the signal peptide. Residues Ser-73, Ser-75, Ser-76, Ser-78, Ser-80, Ser-82, Ser-94, Ser-100, Ser-108, Ser-110, Ser-118, Ser-120, and Ser-121 are each glycosylated (O-linked (GlcNAc...) serine). Positions 73-121 (SASSTSLSASESASTSASESASTSASTSASTSASESASTSASTSISASS) are serine-rich repeat region 1, SRR1. The disordered stretch occupies residues 86–112 (STSASESASTSASTSASTSASESASTS). Residues 122-166 (TVVGSQTAAATEATAKKVEEDRKKPASDYVASVTNVNLQSYAKRR) are self aggregating domain. The interval 122–394 (TVVGSQTAAA…QSKSLSVSAS (273 aa)) is basic region, BR. The short motif at 164–168 (KRRKR) is the Host furin cleavage recognition element. Positions 273 to 341 (TQTMLTLGSD…GYGLTSSWTV (69 aa)) are keratin 10-binding domain, cell-type specific binding to lung-derived cells. The serine-rich repeat region 2, SRR2 stretch occupies residues 395-4712 (QSASASASTS…ASTSASASAS (4318 aa)). Disordered regions lie at residues 481 to 627 (ASTS…STSA), 861 to 889 (ASAS…SAST), 925 to 965 (ASAS…SASA), 1052 to 1085 (SAST…SASA), 1123 to 1153 (ASAS…STSA), 1171 to 1199 (ASAS…STSA), 1311 to 1357 (ASES…SAST), 1671 to 1731 (ASES…SESA), 1792 to 1863 (SASE…STSA), 2105 to 2133 (ASAS…SAST), 2169 to 2209 (ASAS…SASA), 2296 to 2329 (SAST…SASA), 2367 to 2397 (ASAS…STSA), 2415 to 2443 (ASAS…STSA), 2571 to 2631 (ASES…SESA), 2737 to 2805 (ESAS…STSA), 2855 to 3113 (ASAS…STSA), 3347 to 3375 (ASAS…SAST), 3411 to 3451 (ASAS…SASA), 3538 to 3571 (SAST…SASA), 3609 to 3639 (ASAS…STSA), 3657 to 3685 (ASAS…STSA), 3797 to 3843 (ASES…SAST), 4167 to 4197 (ASAS…STSA), 4215 to 4243 (ASAS…STSA), 4355 to 4401 (ASES…SAST), and 4706 to 4747 (SASA…GTES). A compositionally biased stretch (polar residues) spans 4715–4747 (VSNSANHSNSQVGNTSGSTGKSQKELPNTGTES). The LPXTG sorting signal motif lies at 4740 to 4744 (LPNTG). A Pentaglycyl murein peptidoglycan amidated threonine modification is found at Thr-4743. A propeptide spans 4744–4776 (GTESSIGSVLLGVLAAVTGIGLVAKRRKRDEEE) (removed by sortase).

Belongs to the serine-rich repeat protein (SRRP) family. As to quaternary structure, binds to human and mouse protein keratin 10 (KRT10). Glycosylated. Only truncated substrates greater than 25 residues long are glycosylated by the Gtf1-Gtf2 complex in vitro; only Ser residues have been seen to be glycosylated. Based on electrophoretic mobility it is probable that most of the Ser residues in SSR1 and SSR2 are O-GlcNAcylated. Subsequent glycosylation by up to 7 sugar transferases (Gtf3 and GlyAT, GlyB, GlyD, GlyE, GlyF and GlyG) is able to generate very high sugar polymorphism. Post-translationally, can be cleaved by human furin protease; this fragment contributes to self-aggregation and possibly biofilm formation in vitro.

It localises to the secreted. The protein localises to the cell wall. Its subcellular location is the cell surface. Functionally, protein that allows bacteria to adhere to mammalian host cells. Required for full virulence in mouse infection models when infected intranasally. Required for adhesion to host cells in vitro and for persistence in the lower respiratory tract. Binds host keratin 10 (KRT10) on lung cells which mediates adhesion via the C-terminus of the basic region (BR, residues 273-341); glycosylation of either protein is not required for the interaction. A region in the N-terminus (residues 122-166) self aggregates, contributing to mature biofilm formation. The basic region (BR, residues 187-385) also self aggregates; the BR binds DNA which enhances self aggregation. The protein is Pneumococcal serine-rich repeat protein of Streptococcus pneumoniae serotype 4 (strain ATCC BAA-334 / TIGR4).